The primary structure comprises 81 residues: MQNEEGKTVDLYVPRKCSATNRIITAKDHASVQINIGHLDANGLYDGHFTTFALSGFVRAQGDADSSLDRLWQKKKAEIKQ.

Belongs to the eukaryotic ribosomal protein eS21 family.

The protein is Small ribosomal subunit protein eS21 (RPS21) of Zea mays (Maize).